We begin with the raw amino-acid sequence, 236 residues long: Pyridoxal 5'-phosphate synthase subunit PdxT (236 aa).

61 to 63 contacts L-glutamine; the sequence is GES. The Nucleophile role is filled by Cys-93. L-glutamine-binding positions include Arg-127 and 163-164; that span reads IR. Residues His-215 and Glu-217 each act as charge relay system in the active site.

It belongs to the glutaminase PdxT/SNO family. In terms of assembly, in the presence of PdxS, forms a dodecamer of heterodimers. Only shows activity in the heterodimer.

The enzyme catalyses aldehydo-D-ribose 5-phosphate + D-glyceraldehyde 3-phosphate + L-glutamine = pyridoxal 5'-phosphate + L-glutamate + phosphate + 3 H2O + H(+). It catalyses the reaction L-glutamine + H2O = L-glutamate + NH4(+). Its pathway is cofactor biosynthesis; pyridoxal 5'-phosphate biosynthesis. Functionally, catalyzes the hydrolysis of glutamine to glutamate and ammonia as part of the biosynthesis of pyridoxal 5'-phosphate. The resulting ammonia molecule is channeled to the active site of PdxS. This chain is Pyridoxal 5'-phosphate synthase subunit PdxT, found in Arthrobacter sp. (strain FB24).